Here is an 892-residue protein sequence, read N- to C-terminus: Dipeptidyl peptidase 8 (892 aa).

Residues Ser-749, Asp-827, and His-859 each act as charge relay system in the active site.

It belongs to the peptidase S9B family. DPPIV subfamily. In terms of assembly, homodimer. Forms a ternary complex with NLRP1, composed of a DPP8 homodimer, one full-length NLRP1 protein, and one cleaved C-terminus of NLRP1 (NACHT, LRR and PYD domains-containing protein 1, C-terminus). Forms a ternary complex with CARD8, composed of a DPP8 homodimer, one full-length NLRP1 protein, and one cleaved C-terminus of CARD8 (Caspase recruitment domain-containing protein 8, C-terminus). In the ternary complex, only one subunit of the DPP8 homodimer is bound to NLRP1 or CARD8.

It localises to the cytoplasm. The enzyme catalyses Release of an N-terminal dipeptide, Xaa-Yaa-|-Zaa-, from a polypeptide, preferentially when Yaa is Pro, provided Zaa is neither Pro nor hydroxyproline.. With respect to regulation, inhibited by zinc. Inhibited by the serine proteinase inhibitor 4-(2-aminoethyl)benzenesulphonyl fluoride (AEBSF), and by di-isopropylfluorophosphate. Specifically inhibited by isoindoline derivatives. Inhibited by Val-boroPro (Talabostat, PT-100), a non-selective inhibitor, which triggers pyroptosis in monocytes and macrophages. Functionally, dipeptidyl peptidase that cleaves off N-terminal dipeptides from proteins having a Pro or Ala residue at position 2. Acts as a key inhibitor of caspase-1-dependent monocyte and macrophage pyroptosis in resting cells by preventing activation of NLRP1 and CARD8. Sequesters the cleaved C-terminal part of NLRP1 and CARD8, which respectively constitute the active part of the NLRP1 and CARD8 inflammasomes, in a ternary complex, thereby preventing their oligomerization and activation. The dipeptidyl peptidase activity is required to suppress NLRP1 and CARD8; however, neither NLRP1 nor CARD8 are bona fide substrates of DPP8, suggesting the existence of substrate(s) required for NLRP1 and CARD8 inhibition. The protein is Dipeptidyl peptidase 8 of Mus musculus (Mouse).